The sequence spans 580 residues: Rap guanine nucleotide exchange factor 5 (580 aa).

The N-terminal Ras-GEF domain maps to 68–201; it reads DRYVVVSGTP…ELKEFQKILG (134 aa). The 235-residue stretch at 345-579 folds into the Ras-GEF domain; it reads NTWDLALELM…FELSHRIEPR (235 aa).

As to expression, widely expressed with highest levels in brain.

It is found in the nucleus. Functionally, guanine nucleotide exchange factor (GEF) for RAP1A, RAP2A and MRAS/M-Ras-GTP. Its association with MRAS inhibits Rap1 activation. The protein is Rap guanine nucleotide exchange factor 5 (RAPGEF5) of Homo sapiens (Human).